Reading from the N-terminus, the 339-residue chain is UDP-3-O-acylglucosamine N-acyltransferase (339 aa).

The active-site Proton acceptor is the His251.

This sequence belongs to the transferase hexapeptide repeat family. LpxD subfamily. Homotrimer.

It catalyses the reaction a UDP-3-O-[(3R)-3-hydroxyacyl]-alpha-D-glucosamine + a (3R)-hydroxyacyl-[ACP] = a UDP-2-N,3-O-bis[(3R)-3-hydroxyacyl]-alpha-D-glucosamine + holo-[ACP] + H(+). The protein operates within bacterial outer membrane biogenesis; LPS lipid A biosynthesis. In terms of biological role, catalyzes the N-acylation of UDP-3-O-acylglucosamine using 3-hydroxyacyl-ACP as the acyl donor. Is involved in the biosynthesis of lipid A, a phosphorylated glycolipid that anchors the lipopolysaccharide to the outer membrane of the cell. The protein is UDP-3-O-acylglucosamine N-acyltransferase of Paramagnetospirillum magneticum (strain ATCC 700264 / AMB-1) (Magnetospirillum magneticum).